Reading from the N-terminus, the 329-residue chain is GTP 3',8-cyclase (329 aa).

The 227-residue stretch at 8–234 (AFARKFYYLR…QLRQRSDGPA (227 aa)) folds into the Radical SAM core domain. Arginine 17 contributes to the GTP binding site. [4Fe-4S] cluster-binding residues include cysteine 24 and cysteine 28. Position 30 (tyrosine 30) interacts with S-adenosyl-L-methionine. Position 31 (cysteine 31) interacts with [4Fe-4S] cluster. Arginine 68 lines the GTP pocket. S-adenosyl-L-methionine is bound at residue glycine 72. Threonine 99 contacts GTP. Serine 123 is an S-adenosyl-L-methionine binding site. Lysine 160 provides a ligand contact to GTP. An S-adenosyl-L-methionine-binding site is contributed by methionine 194. [4Fe-4S] cluster is bound by residues cysteine 257 and cysteine 260. 262 to 264 (RLR) serves as a coordination point for GTP. Cysteine 274 contacts [4Fe-4S] cluster.

The protein belongs to the radical SAM superfamily. MoaA family. In terms of assembly, monomer and homodimer. It depends on [4Fe-4S] cluster as a cofactor.

It carries out the reaction GTP + AH2 + S-adenosyl-L-methionine = (8S)-3',8-cyclo-7,8-dihydroguanosine 5'-triphosphate + 5'-deoxyadenosine + L-methionine + A + H(+). It functions in the pathway cofactor biosynthesis; molybdopterin biosynthesis. Functionally, catalyzes the cyclization of GTP to (8S)-3',8-cyclo-7,8-dihydroguanosine 5'-triphosphate. This chain is GTP 3',8-cyclase, found in Escherichia coli O45:K1 (strain S88 / ExPEC).